A 131-amino-acid polypeptide reads, in one-letter code: RxLR effector protein 62 (131 aa).

The N-terminal stretch at 1-19 is a signal peptide; the sequence is MRLDILLFTLSSSTSLALS. A RxLR-dEER motif is present at residues 49–60; that stretch reads RHLREEPANEAR. Asparagine 61 is a glycosylation site (N-linked (GlcNAc...) asparagine).

It belongs to the RxLR effector family.

It localises to the secreted. Its subcellular location is the host cell. In terms of biological role, secreted effector that suppresses callose deposition, a hallmark of pathogen-associated molecular pattern (PAMP)-triggered immunity (PTI) and renders host plants more susceptible to bacterial infection. Reduces host plant responsiveness to salicylic acid (SA) in haustoriated cells into which host-translocated effectors are delivered. The sequence is that of RxLR effector protein 62 from Hyaloperonospora arabidopsidis (strain Emoy2) (Downy mildew agent).